The following is a 423-amino-acid chain: Deoxyguanosinetriphosphate triphosphohydrolase-like protein (423 aa).

The 151-residue stretch at 66–216 folds into the HD domain; sequence RLTHSLEVAQ…MDFSDDIAYS (151 aa).

It belongs to the dGTPase family. Type 2 subfamily.

In Corynebacterium diphtheriae (strain ATCC 700971 / NCTC 13129 / Biotype gravis), this protein is Deoxyguanosinetriphosphate triphosphohydrolase-like protein.